Reading from the N-terminus, the 369-residue chain is MKSGRFIGVMSGTSLDGVDVVLATIDEHRVAQLASLSWPIPVSLKQAVLDICQGQQLTLSQFGQLDTQLGRLFADAVNALLKEQNLQARDIVAIGCHGQTVWHEPTGVAPHTLQIGDNNQIAARTGITVVGDFRRRDIALGGQGAPLVPAFHHALLAHPTERRMVLNIGGIANLSLLIPGQPVGGYDTGPGNMLMDAWIWRQAGKPYDKDAEWARAGKVILPLLQNMLSDPYFSQPAPKSTGREYFNYGWLERHLRHFPGVDPRDVQATLAELTAVTISEQVLLSGGCERLMVCGGGSRNPLLMARLAALLPGTEVTTTDAVGISGDDMEALAFAWLAWRTLAGLPGNLPSVTGASQETVLGAIFPANP.

12-19 (GTSLDGVD) is an ATP binding site.

This sequence belongs to the anhydro-N-acetylmuramic acid kinase family.

It catalyses the reaction 1,6-anhydro-N-acetyl-beta-muramate + ATP + H2O = N-acetyl-D-muramate 6-phosphate + ADP + H(+). It functions in the pathway amino-sugar metabolism; 1,6-anhydro-N-acetylmuramate degradation. Its pathway is cell wall biogenesis; peptidoglycan recycling. Functionally, catalyzes the specific phosphorylation of 1,6-anhydro-N-acetylmuramic acid (anhMurNAc) with the simultaneous cleavage of the 1,6-anhydro ring, generating MurNAc-6-P. Is required for the utilization of anhMurNAc either imported from the medium or derived from its own cell wall murein, and thus plays a role in cell wall recycling. The sequence is that of Anhydro-N-acetylmuramic acid kinase from Escherichia coli O7:K1 (strain IAI39 / ExPEC).